A 468-amino-acid chain; its full sequence is Meiotically up-regulated gene 111 protein (468 aa).

12 helical membrane-spanning segments follow: residues 13–33 (LVLI…NSVT), 59–79 (IVSA…VPFY), 92–112 (VFTT…SILY), 116–136 (FPTC…ISGT), 158–178 (IVVL…LGSI), 190–210 (LISW…AVFF), 285–305 (PIPI…FFDI), 330–350 (FGSL…GFSV), 356–376 (TMLI…FATA), 382–402 (LALF…LVAA), 417–437 (ALLE…AFIV), and 446–466 (FFIG…LLLG).

Its subcellular location is the membrane. Its function is as follows. Has a role in meiosis. This is Meiotically up-regulated gene 111 protein (mug111) from Schizosaccharomyces pombe (strain 972 / ATCC 24843) (Fission yeast).